The following is a 379-amino-acid chain: Chaperone protein DnaJ (379 aa).

The J domain occupies 7–72 (DYYEVLGVDK…KKRSMYDQFG (66 aa)). The segment at 147 to 225 (GKKAELSYTR…CGGNGLERKK (79 aa)) adopts a CR-type zinc-finger fold. 8 residues coordinate Zn(2+): C160, C163, C177, C180, C199, C202, C213, and C216. CXXCXGXG motif repeat units lie at residues 160 to 167 (CSECHGTG), 177 to 184 (CPDCKGTG), 199 to 206 (CPTCGGEG), and 213 to 220 (CKKCGGNG).

Belongs to the DnaJ family. Homodimer. It depends on Zn(2+) as a cofactor.

The protein resides in the cytoplasm. In terms of biological role, participates actively in the response to hyperosmotic and heat shock by preventing the aggregation of stress-denatured proteins and by disaggregating proteins, also in an autonomous, DnaK-independent fashion. Unfolded proteins bind initially to DnaJ; upon interaction with the DnaJ-bound protein, DnaK hydrolyzes its bound ATP, resulting in the formation of a stable complex. GrpE releases ADP from DnaK; ATP binding to DnaK triggers the release of the substrate protein, thus completing the reaction cycle. Several rounds of ATP-dependent interactions between DnaJ, DnaK and GrpE are required for fully efficient folding. Also involved, together with DnaK and GrpE, in the DNA replication of plasmids through activation of initiation proteins. This is Chaperone protein DnaJ from Treponema denticola (strain ATCC 35405 / DSM 14222 / CIP 103919 / JCM 8153 / KCTC 15104).